Reading from the N-terminus, the 932-residue chain is Isoleucine--tRNA ligase (932 aa).

Positions 57 to 67 match the 'HIGH' region motif; the sequence is PYANGDIHMGH. Glutamate 556 is an L-isoleucyl-5'-AMP binding site. The short motif at 597–601 is the 'KMSKS' region element; it reads KMSKS. Residue lysine 600 participates in ATP binding. Zn(2+)-binding residues include cysteine 891, cysteine 894, cysteine 911, and cysteine 914.

This sequence belongs to the class-I aminoacyl-tRNA synthetase family. IleS type 1 subfamily. In terms of assembly, monomer. Zn(2+) is required as a cofactor.

The protein resides in the cytoplasm. The enzyme catalyses tRNA(Ile) + L-isoleucine + ATP = L-isoleucyl-tRNA(Ile) + AMP + diphosphate. Functionally, catalyzes the attachment of isoleucine to tRNA(Ile). As IleRS can inadvertently accommodate and process structurally similar amino acids such as valine, to avoid such errors it has two additional distinct tRNA(Ile)-dependent editing activities. One activity is designated as 'pretransfer' editing and involves the hydrolysis of activated Val-AMP. The other activity is designated 'posttransfer' editing and involves deacylation of mischarged Val-tRNA(Ile). This is Isoleucine--tRNA ligase from Lactiplantibacillus plantarum (strain ATCC BAA-793 / NCIMB 8826 / WCFS1) (Lactobacillus plantarum).